We begin with the raw amino-acid sequence, 128 residues long: Holin-like protein CidA (128 aa).

Transmembrane regions (helical) follow at residues 4–24 (LLLT…INWV), 27–46 (ALHI…FTLL), 59–79 (GAAW…VGVI), and 88–108 (FGVS…VSTG).

It belongs to the CidA/LrgA family. CidA subfamily.

The protein localises to the cell membrane. Its function is as follows. Increases the activity of extracellular murein hydrolases possibly by mediating their export via hole formation. Inhibited by the antiholin-like proteins LrgAB. In an unstressed cell, the LrgAB products probably inhibit the function of the CidA protein. When a cell is stressed by the addition of antibiotics or by other factors in the environment, CidA possibly oligomerizes within the bacterial cell membrane, creating lesions that disrupt the proton motive force, which in turn results in loss of cell viability. These lesions are also hypothesized to regulate the subsequent cell lysis by either allowing the murein hydrolases access to the cell wall substrate and/or regulating their activity by a possible change in the cell wall pH that results from loss of membrane potential. This chain is Holin-like protein CidA, found in Bacillus velezensis (strain DSM 23117 / BGSC 10A6 / LMG 26770 / FZB42) (Bacillus amyloliquefaciens subsp. plantarum).